A 130-amino-acid polypeptide reads, in one-letter code: Large ribosomal subunit protein bL20 (130 aa).

Belongs to the bacterial ribosomal protein bL20 family.

Functionally, binds directly to 23S ribosomal RNA and is necessary for the in vitro assembly process of the 50S ribosomal subunit. It is not involved in the protein synthesizing functions of that subunit. The polypeptide is Large ribosomal subunit protein bL20 (Clavibacter sepedonicus (Clavibacter michiganensis subsp. sepedonicus)).